The primary structure comprises 140 residues: Nucleoside diphosphate kinase (140 aa).

ATP contacts are provided by Lys-11, Phe-59, Arg-87, Thr-93, Arg-104, and Asn-114. His-117 functions as the Pros-phosphohistidine intermediate in the catalytic mechanism.

The protein belongs to the NDK family. In terms of assembly, homotetramer. Mg(2+) serves as cofactor.

Its subcellular location is the cytoplasm. It catalyses the reaction a 2'-deoxyribonucleoside 5'-diphosphate + ATP = a 2'-deoxyribonucleoside 5'-triphosphate + ADP. It carries out the reaction a ribonucleoside 5'-diphosphate + ATP = a ribonucleoside 5'-triphosphate + ADP. In terms of biological role, major role in the synthesis of nucleoside triphosphates other than ATP. The ATP gamma phosphate is transferred to the NDP beta phosphate via a ping-pong mechanism, using a phosphorylated active-site intermediate. This Rickettsia conorii (strain ATCC VR-613 / Malish 7) protein is Nucleoside diphosphate kinase.